A 100-amino-acid chain; its full sequence is Large ribosomal subunit protein eL21 (100 aa).

A compositionally biased stretch (basic residues) spans M1–R21. Residues M1–E22 form a disordered region.

Belongs to the eukaryotic ribosomal protein eL21 family.

The sequence is that of Large ribosomal subunit protein eL21 from Pyrobaculum neutrophilum (strain DSM 2338 / JCM 9278 / NBRC 100436 / V24Sta) (Thermoproteus neutrophilus).